Consider the following 42-residue polypeptide: Aryl-alcohol dehydrogenase (42 aa).

The protein belongs to the zinc-containing alcohol dehydrogenase family. Homodimer. Requires Zn(2+) as cofactor.

It carries out the reaction an aromatic primary alcohol + NAD(+) = an aromatic aldehyde + NADH + H(+). Its function is as follows. Oxidizes primary alcohols with an aromatic or cyclohex-1-ene ring. It is highly specific for benzyl alcohol. This chain is Aryl-alcohol dehydrogenase, found in Acinetobacter guillouiae (Acinetobacter genomosp. 11).